The chain runs to 232 residues: Orotate phosphoribosyltransferase (232 aa).

5-phospho-alpha-D-ribose 1-diphosphate is bound by residues Arg107, Lys108, Lys111, His113, and 133-141 (EDLTTAGGS). Residue Thr137 participates in orotate binding.

It belongs to the purine/pyrimidine phosphoribosyltransferase family. PyrE subfamily. Homodimer. Mg(2+) serves as cofactor.

The enzyme catalyses orotidine 5'-phosphate + diphosphate = orotate + 5-phospho-alpha-D-ribose 1-diphosphate. It participates in pyrimidine metabolism; UMP biosynthesis via de novo pathway; UMP from orotate: step 1/2. In terms of biological role, catalyzes the transfer of a ribosyl phosphate group from 5-phosphoribose 1-diphosphate to orotate, leading to the formation of orotidine monophosphate (OMP). This chain is Orotate phosphoribosyltransferase, found in Sinorhizobium medicae (strain WSM419) (Ensifer medicae).